The following is a 371-amino-acid chain: N-acetyldiaminopimelate deacetylase (371 aa).

Asp68 is an active-site residue. Glu127 (proton acceptor) is an active-site residue.

It belongs to the peptidase M20A family. N-acetyldiaminopimelate deacetylase subfamily.

The enzyme catalyses N-acetyl-(2S,6S)-2,6-diaminopimelate + H2O = (2S,6S)-2,6-diaminopimelate + acetate. It functions in the pathway amino-acid biosynthesis; L-lysine biosynthesis via DAP pathway; LL-2,6-diaminopimelate from (S)-tetrahydrodipicolinate (acetylase route): step 3/3. Its function is as follows. Catalyzes the conversion of N-acetyl-diaminopimelate to diaminopimelate and acetate. The polypeptide is N-acetyldiaminopimelate deacetylase (Oceanobacillus iheyensis (strain DSM 14371 / CIP 107618 / JCM 11309 / KCTC 3954 / HTE831)).